A 179-amino-acid polypeptide reads, in one-letter code: Large ribosomal subunit protein uL5 (179 aa).

This sequence belongs to the universal ribosomal protein uL5 family. As to quaternary structure, part of the 50S ribosomal subunit; part of the 5S rRNA/L5/L18/L25 subcomplex. Contacts the 5S rRNA and the P site tRNA. Forms a bridge to the 30S subunit in the 70S ribosome.

This is one of the proteins that bind and probably mediate the attachment of the 5S RNA into the large ribosomal subunit, where it forms part of the central protuberance. In the 70S ribosome it contacts protein S13 of the 30S subunit (bridge B1b), connecting the 2 subunits; this bridge is implicated in subunit movement. Contacts the P site tRNA; the 5S rRNA and some of its associated proteins might help stabilize positioning of ribosome-bound tRNAs. This chain is Large ribosomal subunit protein uL5, found in Agathobacter rectalis (strain ATCC 33656 / DSM 3377 / JCM 17463 / KCTC 5835 / VPI 0990) (Eubacterium rectale).